Here is a 75-residue protein sequence, read N- to C-terminus: Large ribosomal subunit protein bL31 (75 aa).

4 residues coordinate Zn(2+): cysteine 16, cysteine 18, cysteine 38, and cysteine 41.

It belongs to the bacterial ribosomal protein bL31 family. Type A subfamily. As to quaternary structure, part of the 50S ribosomal subunit. The cofactor is Zn(2+).

Its function is as follows. Binds the 23S rRNA. The polypeptide is Large ribosomal subunit protein bL31 (Mycolicibacterium smegmatis (strain ATCC 700084 / mc(2)155) (Mycobacterium smegmatis)).